A 352-amino-acid chain; its full sequence is MHESSRLPVGIIGASGYGGVQLVRLLQDHPQLEVAYLGGDRSAGKEFAELYPHLGPHLNLTIEAIDVDRIAERCAAVFLSLPNGLAYDLAPALLERGCKVLDLSADYRFHDLKTYALWYGGDRQDAAVAHTAIYGLPELYRNRIANAQLIGCPGCYPTASLLALAPALKQGLIDPDTIVIDAKSGTSGAGRQAKTNALLAEAGNSVGAYGVARHRHTPEIEQICSDLSGHEVLLQFTPHLMPMVRGIHATIYAKLRDPNLTTEDCLTVYQAFYRNAPMVKVLTHGTYPQTKWAAGTNLCYLGLEVDARTGRIVLLSAIDNLIKGQAGQAIQCLNLMQGWEEGLGLPTLCYYP.

Residue C155 is part of the active site.

This sequence belongs to the NAGSA dehydrogenase family. Type 1 subfamily.

The protein localises to the cytoplasm. It carries out the reaction N-acetyl-L-glutamate 5-semialdehyde + phosphate + NADP(+) = N-acetyl-L-glutamyl 5-phosphate + NADPH + H(+). The protein operates within amino-acid biosynthesis; L-arginine biosynthesis; N(2)-acetyl-L-ornithine from L-glutamate: step 3/4. Its function is as follows. Catalyzes the NADPH-dependent reduction of N-acetyl-5-glutamyl phosphate to yield N-acetyl-L-glutamate 5-semialdehyde. This Synechococcus elongatus (strain ATCC 33912 / PCC 7942 / FACHB-805) (Anacystis nidulans R2) protein is N-acetyl-gamma-glutamyl-phosphate reductase.